We begin with the raw amino-acid sequence, 612 residues long: Breast cancer type 1 susceptibility protein homolog (612 aa).

An RING-type zinc finger spans residues 21–61 (CGICCSTYKDPILSTCFHIFCRSCINACFERKRKVQCPICR). The disordered stretch occupies residues 140–173 (RRKRPSRPQPPSAFAEEPAEPVEPPEPATKQPVE). 2 consecutive BRCT domains span residues 415–477 (RFAE…DYTI) and 505–603 (EHGK…PYKA).

Heterodimer (via RING-type zinc finger) with brd-1 to form the core CeBCD complex. Brc-1-brd-1 heterodimer-containing CeBCD complexes bound to chromatin are activated as an E3-ubiquitin ligase in response to DNA damage. The heterodimer interacts with the recombinase rad-51 following ionizing irradiation; the interaction is direct. The heterodimer interacts the E2-ubiquitin-conjugating enzyme let-70 following ionizing irradiation. The heterodimer interacts with the pro-crossover proteins msh-5 and syp-3. In terms of processing, phosphorylation of CeBCD complexes is required for E3 ubiquitin-protein ligase activity.

It is found in the nucleus. The protein resides in the chromosome. Its subcellular location is the cytoplasm. The enzyme catalyses S-ubiquitinyl-[E2 ubiquitin-conjugating enzyme]-L-cysteine + [acceptor protein]-L-lysine = [E2 ubiquitin-conjugating enzyme]-L-cysteine + N(6)-ubiquitinyl-[acceptor protein]-L-lysine.. It functions in the pathway protein modification; protein ubiquitination. E3 ubiquitin-protein ligase activity of CeBCD complexes occurs at DNA damage sites. Following DNA damage, E3 ubiquitin-protein ligase activity is reduced by caffeine treatment (inhibitor of ATM and ATK kinase activity). Its function is as follows. E3 ubiquitin-protein ligase that specifically mediates the formation of polyubiquitin chains and plays a central role in DNA repair. Plays a role in triggering cellular responses at damage sites in response to DNA damage that may be induced by UV and ionizing radiation for example. Functions in double-strand break repair, and is required for homologous recombination between sister chromatids in meiotic and mitotic cells. In particular, protects against chromosome non-disjunction and nuclear fragmentation during meiotic double-strand break repair to ensure sister chromatid recombination and aid chromosome stability. Required for normal cell cycle progression. Along with brap-2 modulates the expression of cell cycle arrest protein cki-1 in response to increased levels of reactive oxygen species. Constituent of the CeBCD complex that possesses E3 ubiquitin-protein ligase activity. When bound to chromatin, the brc-1-brd-1 heterodimer within the CeBCD complex is inactive during normal conditions, but in response to DNA damage, the brc-1-brd-1 heterodimer associates with other proteins such as the recombinase rad-51 or the E2-ubiquitin-conjugating enzyme let-70, which activate the CeBCD complex as an E3-ubiquitin ligase. Moreover, association between the brc-1-brd-1 heterodimer and rad-51 and let-70, probably requires DNA checkpoint proteins such as atl-1 and mre-11 in order to induce ubiquitination at DNA damage sites. To this end, the brc-1-brd-1 heterodimer coordinates a diverse range of cellular pathways such as DNA damage repair, ubiquitination and transcriptional regulation to maintain genomic stability. The sequence is that of Breast cancer type 1 susceptibility protein homolog from Caenorhabditis elegans.